Reading from the N-terminus, the 58-residue chain is SPbeta prophage-derived uncharacterized protein YotN (58 aa).

The polypeptide is SPbeta prophage-derived uncharacterized protein YotN (yotN) (Bacillus subtilis (strain 168)).